The following is a 1175-amino-acid chain: Atrophin-1 (1175 aa).

Disordered stretches follow at residues 1-595 (MKTR…VTTS), 608-752 (SSPA…ARFN), and 770-847 (VPLE…HRPP). A Nuclear localization signal motif is present at residues 16 to 32 (RKKEAPGPREELRSRGR). Residues 17 to 29 (KKEAPGPREELRS) show a composition bias toward basic and acidic residues. Ser-34 is modified (phosphoserine). Basic and acidic residues predominate over residues 45-63 (GKAEKSRQTAKKARIEEPS). Residues Ser-77, Ser-79, Ser-101, Ser-103, and Ser-107 each carry the phosphoserine modification. Residues 108–128 (LDGRSINDDGSSDPRDIDQDN) show a composition bias toward basic and acidic residues. Residues 129–152 (RSTSPSIYSPGSVENDSDSSSGLS) show a composition bias toward polar residues. Composition is skewed to pro residues over residues 158–174 (PYHP…PPDS) and 208–217 (GPPPGAPPTH). Low complexity-rich tracts occupy residues 240-253 (GAAA…SGGK) and 262-273 (IPISSSGASGAP). Pro residues predominate over residues 345 to 374 (PPGPEKGPTLAPSPHPLPPASSSAPGPPMR). Low complexity predominate over residues 378–396 (SSSSSSAAASSSSSSSSAS). Positions 416–437 (SMSVSNQPPKYTQPSLPSQAVW) are enriched in polar residues. Basic residues predominate over residues 476 to 491 (THHHHQQQPQQQHHHG). The tract at residues 503–553 (HPLESSNSHHAHPYNMSPSLGSLRPYPPGPAHLPPPHGQVSYNQAGPNGPP) is involved in binding BAIAP2. Positions 527–539 (PYPPGPAHLPPPH) are enriched in pro residues. Residues 547–584 (AGPNGPPVSSSNSSGSSSQASYSCSHPSSSQGPQGASY) are compositionally biased toward low complexity. Phosphoserine is present on Ser-617. The residue at position 626 (Lys-626) is an N6-acetyllysine. Thr-638 carries the phosphothreonine modification. Phosphoserine is present on Ser-646. The residue at position 654 (Thr-654) is a Phosphothreonine. 2 stretches are compositionally biased toward pro residues: residues 693–703 (LPPPPAAPTTG) and 722–737 (PESP…PPPK). Ser-724 is subject to Phosphoserine; by MAPK8. Ser-731 and Ser-733 each carry phosphoserine. The segment covering 780–824 (KRADLVEKVRREAEQRAREEKEREREREREKEREREKERELERSV) has biased composition (basic and acidic residues). The interval 864–879 (DTPALRTLSEYARPHV) is required for interaction with FAT1. Ser-881 bears the Phosphoserine mark. Residues 913–932 (PAAREREREARERDLRDRLK) are disordered. A compositionally biased stretch (basic and acidic residues) spans 914 to 932 (AAREREREARERDLRDRLK). The short motif at 1018-1026 (ALGNDPLAR) is the Nuclear export signal element. The residue at position 1100 (Arg-1100) is an Asymmetric dimethylarginine. A Glycyl lysine isopeptide (Lys-Gly) (interchain with G-Cter in SUMO2) cross-link involves residue Lys-1168.

Interacts with BAIAP2, WWP1, WWP2, WWP3 and RERE. Interacts (via its N-terminus) with MTG8; the interaction enhances transcriptional repression of MTG8. Interacts with PQBP1. Interacts with NR2E1; the interaction represses the transcriptional activity of NR2E1. Interacts with FAT1 (via a C-terminal domain). Phosphorylated in vitro by MAPK8/JNK1 on Ser-724. In terms of tissue distribution, widely expressed. Most abundant in the brain.

It is found in the cytoplasm. The protein localises to the perinuclear region. Its subcellular location is the cell junction. The protein resides in the nucleus. In terms of biological role, transcriptional corepressor. Corepressor of MTG8 transcriptional repression. Has some intrinsic repression activity which is independent of the number of the poly-Q repeats. Recruits NR2E1 to repress transcription. Promotes vascular smooth cell (VSMC) migration and orientation. In Mus musculus (Mouse), this protein is Atrophin-1 (Atn1).